Reading from the N-terminus, the 359-residue chain is DNA polymerase IV (359 aa).

Positions 7 to 188 (IIHIDMDAFY…LPIGKFFGVG (182 aa)) constitute a UmuC domain. Mg(2+) is bound by residues Asp-11 and Asp-106. The active site involves Glu-107.

The protein belongs to the DNA polymerase type-Y family. In terms of assembly, monomer. Requires Mg(2+) as cofactor.

The protein resides in the cytoplasm. It catalyses the reaction DNA(n) + a 2'-deoxyribonucleoside 5'-triphosphate = DNA(n+1) + diphosphate. Functionally, poorly processive, error-prone DNA polymerase involved in untargeted mutagenesis. Copies undamaged DNA at stalled replication forks, which arise in vivo from mismatched or misaligned primer ends. These misaligned primers can be extended by PolIV. Exhibits no 3'-5' exonuclease (proofreading) activity. May be involved in translesional synthesis, in conjunction with the beta clamp from PolIII. The chain is DNA polymerase IV from Clostridium perfringens (strain 13 / Type A).